Consider the following 169-residue polypeptide: uncharacterized protein (169 aa).

Transmembrane regions (helical) follow at residues Arg-62–Leu-84 and Ala-94–Phe-116.

It is found in the cell membrane. This is an uncharacterized protein from Archaeoglobus fulgidus (strain ATCC 49558 / DSM 4304 / JCM 9628 / NBRC 100126 / VC-16).